A 209-amino-acid polypeptide reads, in one-letter code: Protease (209 aa).

Active-site residues include histidine 60, aspartate 77, and cysteine 127.

It belongs to the peptidase C5 family. As to quaternary structure, interacts with protease cofactor pVI-C; this interaction is necessary for protease activation.

It is found in the virion. The protein resides in the host nucleus. It carries out the reaction Cleaves proteins of the adenovirus and its host cell at two consensus sites: -Yaa-Xaa-Gly-Gly-|-Xaa- and -Yaa-Xaa-Gly-Xaa-|-Gly- (in which Yaa is Met, Ile or Leu, and Xaa is any amino acid).. With respect to regulation, requires DNA and protease cofactor for maximal activation. Inside nascent virions, becomes partially activated by binding to the viral DNA, allowing it to cleave the cofactor that binds to the protease and fully activates it. Actin, like the viral protease cofactor, seems to act as a cofactor in the cleavage of cytokeratin 18 and of actin itself. Functionally, cleaves viral precursor proteins (pTP, pIIIa, pVI, pVII, pVIII, and pX) inside newly assembled particles giving rise to mature virions. Protease complexed to its cofactor slides along the viral DNA to specifically locate and cleave the viral precursors. Mature virions have a weakened organization compared to the unmature virions, thereby facilitating subsequent uncoating. Without maturation, the particle lacks infectivity and is unable to uncoat. Late in adenovirus infection, in the cytoplasm, may participate in the cytoskeleton destruction. Cleaves host cell cytoskeletal keratins K7 and K18. This is Protease from Homo sapiens (Human).